The chain runs to 350 residues: MASEDKSKALAAALAQIEKQFGKGSIMRMSDNQITENLQVISTGSLTLDLALGVGGLPRGRVVEIYGPESSGKTTLCLQAVAEAQKLGGTCAYIDAENALDPVYAQKLGVNVEDLLISQPDTGEQALEICDMLVRSSGVDVIVVDSVAALVPKAEIEGEMGDSHVGLQARLMSQALRKLTGNIKRTNTLVIFINQIRMKIGVMFGNPETTTGGNALKFYASVRLDIRRTGGIKKGDEVIGNDTRVKVVKNKVSPPFRQADFEILYGEGISRQGEIIELGVKHGFIDKSGAWYAYNGQKIGQGKDNTREWLKANPAIADEIERKIREAVGVKIEINENQGDEEFADDAFDA.

Glycine 67–threonine 74 provides a ligand contact to ATP.

The protein belongs to the RecA family.

The protein resides in the cytoplasm. Can catalyze the hydrolysis of ATP in the presence of single-stranded DNA, the ATP-dependent uptake of single-stranded DNA by duplex DNA, and the ATP-dependent hybridization of homologous single-stranded DNAs. It interacts with LexA causing its activation and leading to its autocatalytic cleavage. In Chromobacterium violaceum (strain ATCC 12472 / DSM 30191 / JCM 1249 / CCUG 213 / NBRC 12614 / NCIMB 9131 / NCTC 9757 / MK), this protein is Protein RecA.